The sequence spans 465 residues: L-seryl-tRNA(Sec) selenium transferase (465 aa).

The residue at position 294 (lysine 294) is an N6-(pyridoxal phosphate)lysine.

The protein belongs to the SelA family. The cofactor is pyridoxal 5'-phosphate.

It localises to the cytoplasm. It carries out the reaction L-seryl-tRNA(Sec) + selenophosphate + H(+) = L-selenocysteinyl-tRNA(Sec) + phosphate. It functions in the pathway aminoacyl-tRNA biosynthesis; selenocysteinyl-tRNA(Sec) biosynthesis; selenocysteinyl-tRNA(Sec) from L-seryl-tRNA(Sec) (bacterial route): step 1/1. In terms of biological role, converts seryl-tRNA(Sec) to selenocysteinyl-tRNA(Sec) required for selenoprotein biosynthesis. This is L-seryl-tRNA(Sec) selenium transferase from Mannheimia succiniciproducens (strain KCTC 0769BP / MBEL55E).